A 364-amino-acid chain; its full sequence is S-adenosylmethionine:tRNA ribosyltransferase-isomerase (364 aa).

The protein belongs to the QueA family. As to quaternary structure, monomer.

The protein localises to the cytoplasm. The catalysed reaction is 7-aminomethyl-7-carbaguanosine(34) in tRNA + S-adenosyl-L-methionine = epoxyqueuosine(34) in tRNA + adenine + L-methionine + 2 H(+). It functions in the pathway tRNA modification; tRNA-queuosine biosynthesis. In terms of biological role, transfers and isomerizes the ribose moiety from AdoMet to the 7-aminomethyl group of 7-deazaguanine (preQ1-tRNA) to give epoxyqueuosine (oQ-tRNA). This is S-adenosylmethionine:tRNA ribosyltransferase-isomerase from Synechococcus sp. (strain CC9902).